Here is a 352-residue protein sequence, read N- to C-terminus: Beta-methylmalyl-CoA dehydratase (352 aa).

The MaoC-like domain occupies 16 to 129 (LGQTIVHATP…GKTGVVYVHS (114 aa)). Residues 62-65 (PIDS), 85-88 (IANL), and 96-98 (GAV) contribute to the substrate site.

Homodimer.

It catalyses the reaction (2R,3S)-beta-methylmalyl-CoA = 2-methylfumaryl-CoA + H2O. In terms of biological role, involved in the glyoxylate assimilation cycle used to regenerate acetyl-CoA and produce pyruvate as universal precursor for biosynthesis. Catalyzes the reversible dehydration of beta-methylmalyl-CoA ((2R,3S)-beta-methylmalyl-CoA) to yield mesaconyl-CoA (2-methylfumaryl-CoA). In Chloroflexus aurantiacus (strain ATCC 29366 / DSM 635 / J-10-fl), this protein is Beta-methylmalyl-CoA dehydratase (mch).